The sequence spans 156 residues: Snaclec 2 (156 aa).

Residues methionine 1–alanine 21 form the signal peptide. 3 disulfides stabilise this stretch: cysteine 25–cysteine 36, cysteine 53–cysteine 150, and cysteine 125–cysteine 142. A C-type lectin domain is found at phenylalanine 32–lysine 151.

It belongs to the snaclec family. Heterodimer; disulfide-linked. As to expression, expressed by the venom gland.

The protein resides in the secreted. Functionally, interferes with one step of hemostasis (modulation of platelet aggregation, or coagulation cascade, for example). In Bitis gabonica (Gaboon adder), this protein is Snaclec 2.